The chain runs to 250 residues: MIIIKNDTEIEYMRQAGKIVGETLNMLEKAAKPGVTTADLDRLAEDFIKKYNAIPSFKGYGGFPASICTSINEEVIHGIPSKHRVLHEGDIISVDCGAILNGYQGDAARTFAIGEISEEAAKLIKVTKESFFKGVEKAVIGNRLTDISHSIQEYVESFGYGVVRDYVGHGIGKEMHEDPEVPNYGRPGRGPKLVHGMVLAIEPMVDVGTYMVKTQSNDWTVVTQDGSLAAHYENTVAILDNGPEILTLCE.

Position 77 (His-77) interacts with substrate. Residues Asp-95, Asp-106, and His-169 each coordinate a divalent metal cation. His-176 serves as a coordination point for substrate. A divalent metal cation-binding residues include Glu-202 and Glu-233.

Belongs to the peptidase M24A family. Methionine aminopeptidase type 1 subfamily. Monomer. The cofactor is Co(2+). Zn(2+) is required as a cofactor. Requires Mn(2+) as cofactor. It depends on Fe(2+) as a cofactor.

It carries out the reaction Release of N-terminal amino acids, preferentially methionine, from peptides and arylamides.. In terms of biological role, removes the N-terminal methionine from nascent proteins. The N-terminal methionine is often cleaved when the second residue in the primary sequence is small and uncharged (Met-Ala-, Cys, Gly, Pro, Ser, Thr, or Val). Requires deformylation of the N(alpha)-formylated initiator methionine before it can be hydrolyzed. The protein is Methionine aminopeptidase of Clostridium acetobutylicum (strain ATCC 824 / DSM 792 / JCM 1419 / IAM 19013 / LMG 5710 / NBRC 13948 / NRRL B-527 / VKM B-1787 / 2291 / W).